Here is an 89-residue protein sequence, read N- to C-terminus: Heat shock protein 30A (89 aa).

Basic and acidic residues-rich tracts occupy residues 1–11 and 19–39; these read MRNNVERRMQR and LSKD…RESE. Residues 1–55 form a disordered region; sequence MRNNVERRMQRVNEACRLLSKDTEMRRITDQNRQSRESEGTSPNSGKDGKDHFEL. A sHSP domain is found at 35–89; sequence SRESEGTSPNSGKDGKDHFELTLNVRDFSPHELTVKTQGRRVIVTGKHERKSDTE.

Belongs to the small heat shock protein (HSP20) family.

The sequence is that of Heat shock protein 30A (hsp30a) from Xenopus laevis (African clawed frog).